The primary structure comprises 251 residues: Large ribosomal subunit protein uL3 (251 aa).

Residue Gln-151 is modified to N5-methylglutamine. A disordered region spans residues 214-251; that stretch reads KDAPFPAGLKSAANSNSAPTETPAEEVAAPEATEGQEG. Positions 231–251 are enriched in low complexity; that stretch reads APTETPAEEVAAPEATEGQEG.

It belongs to the universal ribosomal protein uL3 family. In terms of assembly, part of the 50S ribosomal subunit. Forms a cluster with proteins L14 and L19. Post-translationally, methylated by PrmB.

One of the primary rRNA binding proteins, it binds directly near the 3'-end of the 23S rRNA, where it nucleates assembly of the 50S subunit. This is Large ribosomal subunit protein uL3 from Rhizorhabdus wittichii (strain DSM 6014 / CCUG 31198 / JCM 15750 / NBRC 105917 / EY 4224 / RW1) (Sphingomonas wittichii).